The chain runs to 72 residues: Protein CYSTEINE-RICH TRANSMEMBRANE MODULE 1 (72 aa).

The span at 1 to 11 shows a compositional bias: polar residues; the sequence is MSQYDHNQSAG. The tract at residues 1 to 46 is disordered; it reads MSQYDHNQSAGANPPPPMSTCTSPPPPIGYPTNQPSHGSVAQGKVE. Pro residues predominate over residues 13-29; it reads NPPPPMSTCTSPPPPIG. A helical membrane pass occupies residues 49 to 65; it reads SKGDGFFKGCLAAMCCC.

The protein belongs to the CYSTM1 family. As to quaternary structure, heterodimers. Binds weakly to CYSTM7 and WIH1/CYSTM13. In terms of tissue distribution, mostly expressed in roots, flowers and siliques and, to a lower extent, in stems and leaves.

It is found in the cell membrane. Its subcellular location is the nucleus. May be involved in aluminium (Al) tolerance. Involved in resistance to abiotic stress. This chain is Protein CYSTEINE-RICH TRANSMEMBRANE MODULE 1, found in Arabidopsis thaliana (Mouse-ear cress).